Consider the following 492-residue polypeptide: Histone-lysine N-methyltransferase PRDM7 (492 aa).

Positions 1-22 (MSPERSQEESPEGDTERTERKP) are disordered. The KRAB-related domain occupies 23–86 (MVKDAFKDIS…RRQAIKLQVD (64 aa)). Residues 111 to 179 (EQSKHQKGMP…ELRRKETEGK (69 aa)) are disordered. The span at 135–150 (GTPNLLNTSDSEQAQK) shows a compositional bias: polar residues. Positions 167 to 179 (LKLELRRKETEGK) are enriched in basic and acidic residues. An SET domain is found at 244 to 358 (PGLRIGPSGI…PGCELLVWSG (115 aa)).

It localises to the nucleus. Its subcellular location is the chromosome. It carries out the reaction N(6),N(6)-dimethyl-L-lysyl(4)-[histone H3] + S-adenosyl-L-methionine = N(6),N(6),N(6)-trimethyl-L-lysyl(4)-[histone H3] + S-adenosyl-L-homocysteine + H(+). Histone methyltransferase that selectively methylates 'Lys-4' of dimethylated histone H3 (H3K4me2) to produce trimethylated 'Lys-4' histone H3 (H3K4me3). May play a role in epigenetic regulation of gene expression by defining an active chromatin state. In Homo sapiens (Human), this protein is Histone-lysine N-methyltransferase PRDM7.